Here is a 244-residue protein sequence, read N- to C-terminus: Protein crossbronx (244 aa).

The UBC core domain maps to 20–176 (QQEYKILAEY…VQKNIKESKD (157 aa)).

The protein belongs to the ubiquitin-conjugating enzyme family. FTS subfamily.

In Drosophila yakuba (Fruit fly), this protein is Protein crossbronx (cbx).